The primary structure comprises 360 residues: NAD(P)H-quinone oxidoreductase subunit 1, chloroplastic (360 aa).

8 helical membrane-spanning segments follow: residues 27-47, 98-118, 129-149, 165-185, 203-223, 253-273, 297-317, and 340-360; these read IWIFVPIFSLVLGIITGVLVI, FSIGPSIAVISILLSYSIIPF, IGIFLWIAISSIAPIGLLMSG, AAQSISYEIPLTLCVLSISLL, FWGWNLWRQPIGFIIFLISSL, FGLFYVASYLNLLISSLFVTV, IFGTTIGIFITLAKTYLFLFI, and FLLPISLGNLLLTTSFQLFSL.

It belongs to the complex I subunit 1 family. As to quaternary structure, NDH is composed of at least 16 different subunits, 5 of which are encoded in the nucleus.

It localises to the plastid. It is found in the chloroplast thylakoid membrane. The catalysed reaction is a plastoquinone + NADH + (n+1) H(+)(in) = a plastoquinol + NAD(+) + n H(+)(out). The enzyme catalyses a plastoquinone + NADPH + (n+1) H(+)(in) = a plastoquinol + NADP(+) + n H(+)(out). Functionally, NDH shuttles electrons from NAD(P)H:plastoquinone, via FMN and iron-sulfur (Fe-S) centers, to quinones in the photosynthetic chain and possibly in a chloroplast respiratory chain. The immediate electron acceptor for the enzyme in this species is believed to be plastoquinone. Couples the redox reaction to proton translocation, and thus conserves the redox energy in a proton gradient. The sequence is that of NAD(P)H-quinone oxidoreductase subunit 1, chloroplastic from Lobularia maritima (Sweet alyssum).